The primary structure comprises 445 residues: Methionine aminopeptidase 2 (445 aa).

The tract at residues 1–80 (MAAQVASGVG…TSKVQTEPPR (80 aa)) is disordered. Residues 57 to 71 (AKKKKKKTKKKKKGT) show a composition bias toward basic residues. Position 195 (H195) interacts with substrate. Residues D215, D226, and H295 each contribute to the a divalent metal cation site. Position 303 (H303) interacts with substrate. Residues E331 and E426 each coordinate a divalent metal cation.

The protein belongs to the peptidase M24A family. Methionine aminopeptidase eukaryotic type 2 subfamily. Co(2+) serves as cofactor. The cofactor is Zn(2+). Requires Mn(2+) as cofactor. Fe(2+) is required as a cofactor.

Its subcellular location is the cytoplasm. The catalysed reaction is Release of N-terminal amino acids, preferentially methionine, from peptides and arylamides.. Functionally, cotranslationally removes the N-terminal methionine from nascent proteins. The N-terminal methionine is often cleaved when the second residue in the primary sequence is small and uncharged (Met-Ala-, Cys, Gly, Pro, Ser, Thr, or Val). The protein is Methionine aminopeptidase 2 of Paracoccidioides brasiliensis (strain Pb03).